The primary structure comprises 474 residues: Glycogen synthase (474 aa).

Position 15 (Lys15) interacts with ADP-alpha-D-glucose.

It belongs to the glycosyltransferase 1 family. Bacterial/plant glycogen synthase subfamily.

The enzyme catalyses [(1-&gt;4)-alpha-D-glucosyl](n) + ADP-alpha-D-glucose = [(1-&gt;4)-alpha-D-glucosyl](n+1) + ADP + H(+). The protein operates within glycan biosynthesis; glycogen biosynthesis. Its function is as follows. Synthesizes alpha-1,4-glucan chains using ADP-glucose. The protein is Glycogen synthase of Finegoldia magna (strain ATCC 29328 / DSM 20472 / WAL 2508) (Peptostreptococcus magnus).